A 273-amino-acid polypeptide reads, in one-letter code: Shikimate dehydrogenase (NADP(+)) (273 aa).

Shikimate is bound by residues 18 to 20 (SKS) and Thr65. Residue Lys69 is the Proton acceptor of the active site. Glu81 lines the NADP(+) pocket. 2 residues coordinate shikimate: Asn90 and Asp105. Residues 130–134 (GAGGA), 154–159 (NRTHSK), and Met217 each bind NADP(+). Tyr219 contacts shikimate. Gly240 serves as a coordination point for NADP(+).

Belongs to the shikimate dehydrogenase family. Homodimer.

The catalysed reaction is shikimate + NADP(+) = 3-dehydroshikimate + NADPH + H(+). Its pathway is metabolic intermediate biosynthesis; chorismate biosynthesis; chorismate from D-erythrose 4-phosphate and phosphoenolpyruvate: step 4/7. Involved in the biosynthesis of the chorismate, which leads to the biosynthesis of aromatic amino acids. Catalyzes the reversible NADPH linked reduction of 3-dehydroshikimate (DHSA) to yield shikimate (SA). The sequence is that of Shikimate dehydrogenase (NADP(+)) from Herminiimonas arsenicoxydans.